Consider the following 735-residue polypeptide: Ion-translocating oxidoreductase complex subunit C (735 aa).

4Fe-4S ferredoxin-type domains lie at 368–397 (MGAP…QQLY) and 407–436 (KATA…VQYF). The [4Fe-4S] cluster site is built by Cys377, Cys380, Cys383, Cys387, Cys416, Cys419, Cys422, and Cys426. Residues 562–713 (AIARAKARKQ…AEPADPRKAA (152 aa)) are disordered.

The protein belongs to the 4Fe4S bacterial-type ferredoxin family. RnfC subfamily. The complex is composed of six subunits: RsxA, RsxB, RsxC, RsxD, RsxE and RsxG. Requires [4Fe-4S] cluster as cofactor.

The protein localises to the cell inner membrane. Functionally, part of a membrane-bound complex that couples electron transfer with translocation of ions across the membrane. Required to maintain the reduced state of SoxR. The sequence is that of Ion-translocating oxidoreductase complex subunit C from Salmonella newport (strain SL254).